The sequence spans 1592 residues: Autophagy-related protein 2 (1592 aa).

At S236 the chain carries Phosphoserine. Residues 264-286 form a disordered region; the sequence is AMEEQSNEDPSEPQVTQEEQEND.

Belongs to the ATG2 family.

The protein resides in the preautophagosomal structure membrane. It is found in the endoplasmic reticulum membrane. The enzyme catalyses a 1,2-diacyl-sn-glycero-3-phosphocholine(in) = a 1,2-diacyl-sn-glycero-3-phosphocholine(out). It carries out the reaction a 1,2-diacyl-sn-glycero-3-phospho-L-serine(in) = a 1,2-diacyl-sn-glycero-3-phospho-L-serine(out). It catalyses the reaction a 1,2-diacyl-sn-glycero-3-phosphoethanolamine(in) = a 1,2-diacyl-sn-glycero-3-phosphoethanolamine(out). Lipid transfer protein required for autophagosome completion and peroxisome degradation. Tethers the edge of the isolation membrane (IM) to the endoplasmic reticulum (ER) and mediates direct lipid transfer from ER to IM for IM expansion. ATG2 binds to the ER exit site (ERES), which is the membrane source for autophagosome formation, using basic residues in its N-terminal region (NR) and to the expanding edge of the IM through its C-terminal region. The latter binding is assisted by an ATG18-PtdIns3P interaction. ATG2 then extracts phospholipids from the membrane source using its NR and transfers them to ATG9 to the IM through its predicted beta-sheet-rich structure for membrane expansion. This Saccharomyces cerevisiae (strain YJM789) (Baker's yeast) protein is Autophagy-related protein 2 (ATG2).